The sequence spans 298 residues: Large ribosomal subunit protein uL18 (298 aa).

The protein belongs to the universal ribosomal protein uL18 family. In terms of assembly, component of the large ribosomal subunit. Mature ribosomes consist of a small (40S) and a large (60S) subunit. The 40S subunit contains about 32 different proteins and 1 molecule of RNA (18S). The 60S subunit contains 45 different proteins and 3 molecules of RNA (25S, 5.8S and 5S).

It localises to the cytoplasm. In terms of biological role, component of the ribosome, a large ribonucleoprotein complex responsible for the synthesis of proteins in the cell. The small ribosomal subunit (SSU) binds messenger RNAs (mRNAs) and translates the encoded message by selecting cognate aminoacyl-transfer RNA (tRNA) molecules. The large subunit (LSU) contains the ribosomal catalytic site termed the peptidyl transferase center (PTC), which catalyzes the formation of peptide bonds, thereby polymerizing the amino acids delivered by tRNAs into a polypeptide chain. The nascent polypeptides leave the ribosome through a tunnel in the LSU and interact with protein factors that function in enzymatic processing, targeting, and the membrane insertion of nascent chains at the exit of the ribosomal tunnel. This chain is Large ribosomal subunit protein uL18, found in Candida albicans (strain SC5314 / ATCC MYA-2876) (Yeast).